The following is a 230-amino-acid chain: Orotidine 5'-phosphate decarboxylase (230 aa).

Substrate is bound by residues Asp10, Lys31, 58-67 (DLKLHDIPNT), Thr117, Arg179, Gln188, Gly208, and Arg209. The active-site Proton donor is the Lys60. Residues 177-196 (GIRPKDASSDDQKRITTPED) are disordered. The span at 179–196 (RPKDASSDDQKRITTPED) shows a compositional bias: basic and acidic residues.

It belongs to the OMP decarboxylase family. Type 1 subfamily. In terms of assembly, homodimer.

The enzyme catalyses orotidine 5'-phosphate + H(+) = UMP + CO2. It functions in the pathway pyrimidine metabolism; UMP biosynthesis via de novo pathway; UMP from orotate: step 2/2. Catalyzes the decarboxylation of orotidine 5'-monophosphate (OMP) to uridine 5'-monophosphate (UMP). The sequence is that of Orotidine 5'-phosphate decarboxylase from Staphylococcus saprophyticus subsp. saprophyticus (strain ATCC 15305 / DSM 20229 / NCIMB 8711 / NCTC 7292 / S-41).